A 361-amino-acid chain; its full sequence is Tetrathionate reductase subunit C (361 aa).

The next 9 membrane-spanning stretches (helical) occupy residues 26–46, 53–73, 104–124, 160–180, 193–213, 233–253, 258–278, 288–308, and 334–354; these read FSYALLISGADLLLLAALALL, AIPMFLILGLSFFSVILLGPL, ALYGGLLWPLTFIVALIFALL, LAAILVPLSALWTIYPGMLFF, LMLPMFFGETFITATGTALIL, GAAAIALAGVLILQMFIWGMW, FAAVVPMMQAAAVIFLLTFIL, ITPIVPVLALFGVVVNKWNLI, and AVSPIALAILLLVILSYIFPM.

It belongs to the NrfD family. In terms of assembly, probably composed of three subunits: TtrA, TtrB and TtrC.

The protein resides in the cell membrane. Part of a membrane-bound tetrathionate reductase that catalyzes the reduction of tetrathionate to thiosulfate. TtrC probably anchors TtrA and TtrB to the external face of the cytoplasmic membrane. May transfer electrons from membrane quinol to TtrB. This is Tetrathionate reductase subunit C (ttrC) from Archaeoglobus fulgidus (strain ATCC 49558 / DSM 4304 / JCM 9628 / NBRC 100126 / VC-16).